Reading from the N-terminus, the 390-residue chain is 4-hydroxycoumarin synthase 1 (390 aa).

Residue Cys161 is part of the active site.

This sequence belongs to the thiolase-like superfamily. Chalcone/stilbene synthases family. As to quaternary structure, homodimer.

The catalysed reaction is 2-hydroxybenzoyl-CoA + malonyl-CoA = 4-hydroxycoumarin + CO2 + 2 CoA. Functionally, type III polyketide synthase involved preferentially in the biosynthesis of 4-hydroxycoumarin from salicoyl-CoA. Can also use benzoyl-CoA and malonyl-CoA to produce 3,5-dihydroxybiphenyl as a major product and benzoyldiacetic acid lactone as a minor side product. Can also use m-hydroxybenzoyl-CoA as substrate, producing m-hydroxybenzoyl diacetic acid lactone as a derailment product. No activity with p-hydroxybenzoyl-CoA, CoA-linked cinnamic acids or acetyl-CoA. The sequence is that of 4-hydroxycoumarin synthase 1 (BIS2) from Sorbus aucuparia (European mountain ash).